The following is a 113-amino-acid chain: U11-theraphotoxin-Hhn1a (113 aa).

The N-terminal stretch at 1 to 21 (MNTVRVTFLLVFVLAVSLGQT) is a signal peptide. The propeptide occupies 22–74 (DKDENRMEMQEKTEQGKSYLDFAENLLLQKLEELEAKLLEEDSEESRNSRQKR). Disulfide bonds link Cys75–Cys90, Cys82–Cys95, and Cys89–Cys110.

Belongs to the neurotoxin 14 (magi-1) family. 01 (HNTX-16) subfamily. As to expression, expressed by the venom gland.

The protein localises to the secreted. Its function is as follows. Probable ion channel inhibitor. This Cyriopagopus hainanus (Chinese bird spider) protein is U11-theraphotoxin-Hhn1a.